Here is a 362-residue protein sequence, read N- to C-terminus: Dihydroorotate dehydrogenase (quinone) (362 aa).

Residues 62 to 66 (AGYDK) and Thr-86 contribute to the FMN site. Residue Lys-66 coordinates substrate. 111 to 115 (NRLGF) is a binding site for substrate. Residues Asn-139 and Asn-170 each coordinate FMN. Asn-170 contacts substrate. The Nucleophile role is filled by Ser-173. A substrate-binding site is contributed by Asn-175. The FMN site is built by Lys-215 and Ser-243. Position 244 to 245 (244 to 245 (NT)) interacts with substrate. FMN-binding positions include Gly-266, Gly-295, and 316–317 (YS).

The protein belongs to the dihydroorotate dehydrogenase family. Type 2 subfamily. In terms of assembly, monomer. The cofactor is FMN.

The protein resides in the cell membrane. It catalyses the reaction (S)-dihydroorotate + a quinone = orotate + a quinol. Its pathway is pyrimidine metabolism; UMP biosynthesis via de novo pathway; orotate from (S)-dihydroorotate (quinone route): step 1/1. Functionally, catalyzes the conversion of dihydroorotate to orotate with quinone as electron acceptor. The sequence is that of Dihydroorotate dehydrogenase (quinone) from Sinorhizobium fredii (strain NBRC 101917 / NGR234).